The sequence spans 100 residues: MKLTPREKDKLLIFTAALLAERRRARGLKLNYPETIAFITAALMEAARDGKTVAEVMHYGTTLLTRDDVMEGVPEMIPDIQVEATFPDGTKLVTVHHPIP.

It belongs to the urease gamma subunit family. Heterotrimer of UreA (gamma), UreB (beta) and UreC (alpha) subunits. Three heterotrimers associate to form the active enzyme.

It is found in the cytoplasm. The enzyme catalyses urea + 2 H2O + H(+) = hydrogencarbonate + 2 NH4(+). It functions in the pathway nitrogen metabolism; urea degradation; CO(2) and NH(3) from urea (urease route): step 1/1. This is Urease subunit gamma from Burkholderia thailandensis (strain ATCC 700388 / DSM 13276 / CCUG 48851 / CIP 106301 / E264).